The chain runs to 430 residues: Histidine--tRNA ligase (430 aa).

This sequence belongs to the class-II aminoacyl-tRNA synthetase family. As to quaternary structure, homodimer.

Its subcellular location is the cytoplasm. It catalyses the reaction tRNA(His) + L-histidine + ATP = L-histidyl-tRNA(His) + AMP + diphosphate + H(+). The chain is Histidine--tRNA ligase (hisS) from Chlamydia pneumoniae (Chlamydophila pneumoniae).